A 401-amino-acid chain; its full sequence is Glutamyl-tRNA reductase (401 aa).

Substrate-binding positions include 45–48, serine 101, 106–108, and glutamine 112; these read TCNR and EDQ. Cysteine 46 (nucleophile) is an active-site residue. An NADP(+)-binding site is contributed by 177-182; it reads GYGDVG.

Belongs to the glutamyl-tRNA reductase family. Homodimer.

It catalyses the reaction (S)-4-amino-5-oxopentanoate + tRNA(Glu) + NADP(+) = L-glutamyl-tRNA(Glu) + NADPH + H(+). The protein operates within porphyrin-containing compound metabolism; protoporphyrin-IX biosynthesis; 5-aminolevulinate from L-glutamyl-tRNA(Glu): step 1/2. Its function is as follows. Catalyzes the NADPH-dependent reduction of glutamyl-tRNA(Glu) to glutamate 1-semialdehyde (GSA). The chain is Glutamyl-tRNA reductase from Clostridium botulinum (strain Eklund 17B / Type B).